A 209-amino-acid polypeptide reads, in one-letter code: D-aminoacyl-tRNA deacylase 1 (209 aa).

Mg(2+) is bound by residues Val4, Gln6, and Cys28. Residues 139–140 carry the Gly-cisPro motif, important for rejection of L-amino acids motif; sequence GP. The disordered stretch occupies residues 142–209; that stretch reads TIELESPAPG…EGDVSSEREP (68 aa). Composition is skewed to basic and acidic residues over residues 159–170 and 181–194; these read QLSKLEKQQQRK and SSKE…EDRS. Phosphoserine is present on residues Ser197, Ser204, and Ser205.

It belongs to the DTD family. In terms of assembly, homodimer. Interacts with CDC45 and TOPBP1. Preferentially phosphorylated in cells arrested early in S phase. Phosphorylation in the C-terminus weakens the interaction with CDC45.

It localises to the nucleus. Its subcellular location is the cytoplasm. The enzyme catalyses glycyl-tRNA(Ala) + H2O = tRNA(Ala) + glycine + H(+). It catalyses the reaction a D-aminoacyl-tRNA + H2O = a tRNA + a D-alpha-amino acid + H(+). In terms of biological role, an aminoacyl-tRNA editing enzyme that deacylates mischarged D-aminoacyl-tRNAs. Also deacylates mischarged glycyl-tRNA(Ala), protecting cells against glycine mischarging by AlaRS. Acts via tRNA-based rather than protein-based catalysis; rejects L-amino acids rather than detecting D-amino acids in the active site. By recycling D-aminoacyl-tRNA to D-amino acids and free tRNA molecules, this enzyme counteracts the toxicity associated with the formation of D-aminoacyl-tRNA entities in vivo and helps enforce protein L-homochirality. Its function is as follows. ATPase involved in DNA replication, may facilitate loading of CDC45 onto pre-replication complexes. This Bos taurus (Bovine) protein is D-aminoacyl-tRNA deacylase 1 (DTD1).